The primary structure comprises 123 residues: Fluoride-specific ion channel FluC 1 (123 aa).

4 helical membrane-spanning segments follow: residues 1 to 21, 34 to 54, 59 to 79, and 99 to 119; these read MVDL…RYTL, PLAT…LYGF, VIWL…STYI, and LTSI…ANFF. Na(+)-binding residues include Gly-70 and Thr-73.

Belongs to the fluoride channel Fluc/FEX (TC 1.A.43) family.

The protein resides in the cell membrane. It catalyses the reaction fluoride(in) = fluoride(out). Its activity is regulated as follows. Na(+) is not transported, but it plays an essential structural role and its presence is essential for fluoride channel function. Fluoride-specific ion channel. Important for reducing fluoride concentration in the cell, thus reducing its toxicity. The polypeptide is Fluoride-specific ion channel FluC 1 (Carboxydothermus hydrogenoformans (strain ATCC BAA-161 / DSM 6008 / Z-2901)).